The primary structure comprises 140 residues: Histone H2B.1, sperm (140 aa).

The tract at residues 1 to 47 (MPSQRSPTKRSPTKRSPQKGAGKGGKGSKRGGKARRRGGAAVRRRRR) is disordered. 3 consecutive short sequence motifs (SPKK motif) follow at residues 6 to 9 (SPTK), 11 to 14 (SPTK), and 16 to 19 (SPQK). Composition is skewed to basic residues over residues 7–17 (PTKRSPTKRSP) and 26–47 (KGSK…RRRR). A phosphoserine mark is found at Ser11 and Ser16. Ser127 carries O-linked (GlcNAc) serine glycosylation. Lys135 participates in a covalent cross-link: Glycyl lysine isopeptide (Lys-Gly) (interchain with G-Cter in ubiquitin).

The protein belongs to the histone H2B family. As to quaternary structure, the nucleosome is a histone octamer containing two molecules each of H2A, H2B, H3 and H4 assembled in one H3-H4 heterotetramer and two H2A-H2B heterodimers. The octamer wraps approximately 147 bp of DNA. In terms of processing, monoubiquitination of Lys-135 gives a specific tag for epigenetic transcriptional activation and is also prerequisite for histone H3 'Lys-4' and 'Lys-79' methylation. Phosphorylated on SPKK motifs 2 and 3; which may regulate DNA binding. Dephosphorylated during maturation of spermatids to mature sperm and rephosphorylated at fertilization. Post-translationally, glcNAcylation at Ser-127 promotes monoubiquitination of Lys-135. It fluctuates in response to extracellular glucose, and associates with transcribed genes.

It is found in the nucleus. It localises to the chromosome. In terms of biological role, core component of nucleosome. Nucleosomes wrap and compact DNA into chromatin, limiting DNA accessibility to the cellular machineries which require DNA as a template. Histones thereby play a central role in transcription regulation, DNA repair, DNA replication and chromosomal stability. DNA accessibility is regulated via a complex set of post-translational modifications of histones, also called histone code, and nucleosome remodeling. In Strongylocentrotus purpuratus (Purple sea urchin), this protein is Histone H2B.1, sperm.